Here is a 79-residue protein sequence, read N- to C-terminus: Large ribosomal subunit protein uL24 (79 aa).

It belongs to the universal ribosomal protein uL24 family. In terms of assembly, part of the 50S ribosomal subunit.

Its function is as follows. One of two assembly initiator proteins, it binds directly to the 5'-end of the 23S rRNA, where it nucleates assembly of the 50S subunit. Functionally, one of the proteins that surrounds the polypeptide exit tunnel on the outside of the subunit. This is Large ribosomal subunit protein uL24 from Lactobacillus delbrueckii subsp. bulgaricus (strain ATCC 11842 / DSM 20081 / BCRC 10696 / JCM 1002 / NBRC 13953 / NCIMB 11778 / NCTC 12712 / WDCM 00102 / Lb 14).